The sequence spans 942 residues: Exopolysaccharide phosphotransferase SCO2592 (942 aa).

This sequence belongs to the stealth family.

The chain is Exopolysaccharide phosphotransferase SCO2592 from Streptomyces coelicolor (strain ATCC BAA-471 / A3(2) / M145).